The sequence spans 175 residues: Interferon a3 (175 aa).

A signal peptide spans 1–23 (MYTMQSWSCIFLIICSMQSVCHC). Cysteine 24 and cysteine 120 are joined by a disulfide.

The protein belongs to the alpha/beta interferon family. Isoform 1 and isoform 2 are expressed in several tissues, including gill, spleen, intestine, kidney and skin.

The protein resides in the secreted. Its subcellular location is the cytoplasm. It is found in the cytosol. Its function is as follows. Key player in antiviral response. Induces expression of TLRs, including that of TLR3, TLR9 and TLR8a1, and that of cytosolic pattern recognition receptors, including RIGI, IFIH1/MDA5 and DHX58/LGP2. Also induces MX1 and its own expression. In the presence of intracellular IFNAR2 (iIFNAR2) and IFNAR1B, intracellular isoform 3 may mediate STAT1 and STAT2 phosphorylation and induction of EIF2AK2, MX1 and RSAD2. This Oncorhynchus mykiss (Rainbow trout) protein is Interferon a3.